The primary structure comprises 342 residues: Autoinducer 2 import system permease protein LsrC (342 aa).

The Periplasmic portion of the chain corresponds to 1–13; it reads MLKFIQNNREITA. Residues 14–34 form a helical membrane-spanning segment; sequence LLAVVLLFVLPGFLDRQYLSV. The Cytoplasmic segment spans residues 35-38; the sequence is QTLT. The helical transmembrane segment at 39–59 threads the bilayer; sequence MVYSSAQILILLAMGATLVML. Topologically, residues 60-69 are periplasmic; it reads TRNIDVSVGS. A helical transmembrane segment spans residues 70-90; it reads ITGMCAVLLGMLLNAGYSLPV. At 91–92 the chain is on the cytoplasmic side; it reads AC. A helical membrane pass occupies residues 93-113; it reads VATLLLGLLAGFFNGVLVAWL. Position 114 (Lys114) is a topological domain, periplasmic. Residues 115–135 form a helical membrane-spanning segment; the sequence is IPAIVATLGTLGLYRGIMLLW. Residues 136–154 lie on the Cytoplasmic side of the membrane; sequence TGGKWIEGLPAELKQLSAP. The helical transmembrane segment at 155–175 threads the bilayer; the sequence is LLLGVSAIGWLTIILVAFMAW. Residues 176-212 are Periplasmic-facing; the sequence is LLAKTAFGRSFYATGDNLQGARQLGVRTEAIRIVAFS. The helical transmembrane segment at 213-233 threads the bilayer; that stretch reads LNGCMAALAGIVFASQIGFIP. Topologically, residues 234–251 are cytoplasmic; sequence NQTGTGLEMKAIAACVLG. Residues 252–272 form a helical membrane-spanning segment; the sequence is GISLLGGSGAIIGAVLGAWFL. At 273 to 283 the chain is on the periplasmic side; sequence TQIDSVLVLLR. The chain crosses the membrane as a helical span at residues 284–304; that stretch reads IPAWWNDFIAGLVLLAVLVFD. Topologically, residues 305–342 are cytoplasmic; that stretch reads GRLRCALERNLRRQKYARFMTPPPSVKPASSGKKREAA.

This sequence belongs to the binding-protein-dependent transport system permease family. AraH/RbsC subfamily. As to quaternary structure, the complex is composed of two ATP-binding proteins (LsrA), two transmembrane proteins (LsrC and LsrD) and a solute-binding protein (LsrB).

It is found in the cell inner membrane. Its function is as follows. Part of the ABC transporter complex LsrABCD involved in autoinducer 2 (AI-2) import. Probably responsible for the translocation of the substrate across the membrane. The sequence is that of Autoinducer 2 import system permease protein LsrC (lsrC) from Escherichia coli (strain K12 / DH10B).